The sequence spans 1146 residues: Probable phospholipid-transporting ATPase IIB (1146 aa).

The Cytoplasmic segment spans residues M1–T143. Residues F144–V164 form a helical membrane-spanning segment. Over S165–A172 the chain is Extracellular. Residues L173 to I193 traverse the membrane as a helical segment. Residues A194–K381 are Cytoplasmic-facing. A helical membrane pass occupies residues A382 to G402. Residues P403–N407 are Extracellular-facing. Residues L408–L427 traverse the membrane as a helical segment. At D428–G938 the chain is on the cytoplasmic side. The active-site 4-aspartylphosphate intermediate is the D467. Residues D467, K468, and T469 each contribute to the ATP site. D467 contributes to the Mg(2+) binding site. Residue T469 participates in Mg(2+) binding. Residues V508–S519 show a composition bias toward polar residues. Positions V508–S535 are disordered. The ATP site is built by E590, F632, K637, K656, R685, T686, T765, G766, D767, R847, and K853. D873 contributes to the Mg(2+) binding site. The ATP site is built by N876 and D877. Mg(2+) is bound at residue D877. Residues L939–L959 traverse the membrane as a helical segment. At Y960–Q961 the chain is on the extracellular side. Residues G962 to L982 form a helical membrane-spanning segment. Over D983 to T1011 the chain is Cytoplasmic. Residues F1012 to L1032 form a helical membrane-spanning segment. Over L1033–H1040 the chain is Extracellular. A helical transmembrane segment spans residues V1041–I1061. The Cytoplasmic segment spans residues R1062–H1065. Residues W1066 to L1086 traverse the membrane as a helical segment. The Extracellular portion of the chain corresponds to N1087–F1105. A helical transmembrane segment spans residues I1106–V1128. The Cytoplasmic portion of the chain corresponds to L1129–S1146.

The protein belongs to the cation transport ATPase (P-type) (TC 3.A.3) family. Type IV subfamily. Requires Mg(2+) as cofactor. Found in most tissues except spleen and muscle. Most abundant in testis. Also detected in fetal tissues.

It is found in the golgi apparatus. Its subcellular location is the trans-Golgi network membrane. The enzyme catalyses ATP + H2O + phospholipidSide 1 = ADP + phosphate + phospholipidSide 2.. In Mus musculus (Mouse), this protein is Probable phospholipid-transporting ATPase IIB (Atp9b).